Reading from the N-terminus, the 273-residue chain is uncharacterized protein (273 aa).

It belongs to the ycf23 family.

It is found in the plastid. The protein localises to the chloroplast. This is an uncharacterized protein from Pyropia yezoensis (Susabi-nori).